The sequence spans 101 residues: Small ribosomal subunit protein uS14 (101 aa).

This sequence belongs to the universal ribosomal protein uS14 family. Part of the 30S ribosomal subunit. Contacts proteins S3 and S10.

Its function is as follows. Binds 16S rRNA, required for the assembly of 30S particles and may also be responsible for determining the conformation of the 16S rRNA at the A site. This Enterobacter sp. (strain 638) protein is Small ribosomal subunit protein uS14.